The chain runs to 115 residues: Putative HNH nuclease YajD (115 aa).

The region spanning 27 to 75 (CGRCSREFVYSNLRELTVHHIDHDHTNNPEDGSNWELLCLYCHDHEHSK) is the HNH domain.

Belongs to the HNH nuclease family.

The sequence is that of Putative HNH nuclease YajD (yajD) from Salmonella typhi.